The sequence spans 347 residues: MSLIDQLNQLEQEALAALDHAADLTALAEWKSAYLGKQGALSRLSRGLGALPAEERPAAGARFNAARATLEQALERAEAQLKRAARQHAFEADQVDVTLPGRAPAVGRLHPTTQMLRTIYTILGEMGFQVWESPEVETDEFNFQLLNMPPDHPARDMWDTFYVETASGEPTLLLRTHTSPGQIYAMRANAPNPVRAILPGKCYRYEQVTARHEMQFFQVEGIAIGERISFADLKGTLVAFAERLYGKGVKTRFRPSYFPFTEPSVEFDIECFLCGGAGCRVCKHSGWLEILGAGMIHPTVLRNGGYDPEKVSGFAFGMGPERMAMLRYGIDDIRWFFSGDERFLQQF.

Glu262 is a Mg(2+) binding site.

The protein belongs to the class-II aminoacyl-tRNA synthetase family. Phe-tRNA synthetase alpha subunit type 1 subfamily. Tetramer of two alpha and two beta subunits. Mg(2+) is required as a cofactor.

It localises to the cytoplasm. It catalyses the reaction tRNA(Phe) + L-phenylalanine + ATP = L-phenylalanyl-tRNA(Phe) + AMP + diphosphate + H(+). This is Phenylalanine--tRNA ligase alpha subunit from Roseiflexus castenholzii (strain DSM 13941 / HLO8).